The sequence spans 354 residues: MANQYHNDLLAPYLALDQGGKFHAEYVWIDGDGGLRSKTTTVDQKVTDISQLRVWDFDGSSTNQAPSGNSDVYLRPSAIFKDPFRGGENILVLSETYNNDGTPNRTNHRHHTAKVMELAKDEIPWFGIEQEYTLFDADGSPYGWPKGGFPGPQGPYYCGAGTGKVFARDLIEAHYRACLYAGVNISGINAEVMPSQWEFQVGPCEGISMGDHLWMARYLLIRVAEQWGVKVSFHPKPLQGDWNGAGAHTNYSTLAMREPGGMKYIEAAIEKLAKRHDEHIAVYGEDNEMRLTGRHETGHIGTFSSGVANRGASIRVPRHVANKGYGYLEDRRPASNIDPYRVTGIIIETTILDK.

A GS beta-grasp domain is found at 22–101 (FHAEYVWIDG…VLSETYNNDG (80 aa)). The GS catalytic domain occupies 108–354 (HRHHTAKVME…IIIETTILDK (247 aa)).

It belongs to the glutamine synthetase family. In terms of assembly, homooctamer.

The protein resides in the cytoplasm. The catalysed reaction is L-glutamate + NH4(+) + ATP = L-glutamine + ADP + phosphate + H(+). The protein is Glutamine synthetase (GLN1) of Amanita muscaria (Fly agaric).